We begin with the raw amino-acid sequence, 884 residues long: Protein translocase subunit SecA (884 aa).

ATP-binding positions include Q82, 100–104 (GEGKT), and D491.

This sequence belongs to the SecA family.

The protein localises to the plastid. Its subcellular location is the chloroplast stroma. It localises to the chloroplast thylakoid membrane. It catalyses the reaction ATP + H2O + cellular proteinSide 1 = ADP + phosphate + cellular proteinSide 2.. In terms of biological role, has a central role in coupling the hydrolysis of ATP to the transfer of proteins across the thylakoid membrane. The protein is Protein translocase subunit SecA of Olisthodiscus luteus (Marine phytoflagellate).